The primary structure comprises 192 residues: Protein hunchback (192 aa).

2 disordered regions span residues 16 to 54 (SHHH…SNTN) and 152 to 192 (LTPP…KYMA). Basic residues predominate over residues 17-28 (HHHHHHHAHHSH). The segment covering 32 to 41 (SNSNASSPHQ) has biased composition (low complexity). A compositionally biased stretch (basic and acidic residues) spans 173-192 (EPEKEHDLMSNSSEDMKYMA).

The protein belongs to the hunchback C2H2-type zinc-finger protein family.

The protein resides in the nucleus. Its function is as follows. Gap class segmentation protein that controls development of head structures. This is Protein hunchback (hb) from Drosophila tanythrix (Fruit fly).